We begin with the raw amino-acid sequence, 336 residues long: Probable allantoicase (336 aa).

The protein belongs to the allantoicase family.

It catalyses the reaction allantoate + H2O = (S)-ureidoglycolate + urea. Its pathway is nitrogen metabolism; (S)-allantoin degradation; (S)-ureidoglycolate from allantoate (aminidohydrolase route): step 1/1. This is Probable allantoicase from Acinetobacter baumannii (strain ACICU).